A 388-amino-acid polypeptide reads, in one-letter code: MRVLAAIALGATGLRGALAAVVPQEVLGTNPHIHHEQEKYLIELAPYQTRWVTEEEKWALKLDGVNFIDITEEHNTGFYPTLNSASYVKYPLKMQYADEVVALNKNLSTANMKANLEHFTSFHTRYYKSQTGIESATWLASQVEKVITESGAANHGATVERFAHPWGQFSIIARIPGQTNKTVVLGAHQDSINLFLPSILAAPGADDDGSGTVTILEALRGLLQSGSVAQGNATNTIEFHWYSAEEGGMLGSQAVFSSYKKNRREVKAMLQQDMTGYTKGALDAGAKEAVGIMIDYVDQGLTRFVKEIVTTYCSLGYVETKCGYACSDHTSASKYGYPAAMATESEMENTNRKIHTTDDQIKYLSFDHMLEHAKLTLGFAYELAFAPF.

The first 19 residues, 1-19 (MRVLAAIALGATGLRGALA), serve as a signal peptide directing secretion. A propeptide spanning residues 20-88 (AVVPQEVLGT…YPTLNSASYV (69 aa)) is cleaved from the precursor. Residues N106 and N180 are each glycosylated (N-linked (GlcNAc...) asparagine). Positions 188 and 207 each coordinate Zn(2+). N232 carries N-linked (GlcNAc...) asparagine glycosylation. Zn(2+) is bound by residues E246 and D273. An intrachain disulfide couples C322 to C326. A Zn(2+)-binding site is contributed by H355.

It belongs to the peptidase M28 family. M28E subfamily. As to quaternary structure, monomer. It depends on Zn(2+) as a cofactor.

It is found in the secreted. Its function is as follows. Extracellular aminopeptidase that allows assimilation of proteinaceous substrates. This chain is Leucine aminopeptidase 1 (lap1), found in Aspergillus clavatus (strain ATCC 1007 / CBS 513.65 / DSM 816 / NCTC 3887 / NRRL 1 / QM 1276 / 107).